We begin with the raw amino-acid sequence, 215 residues long: Proapoptotic nucleolar protein 1 (215 aa).

Positions R35 to T215 are disordered. Pro residues predominate over residues P169–P180. The segment at M185–T215 is necessary for nucleolar localization.

Widely expressed.

The protein resides in the nucleus. The protein localises to the nucleolus. In terms of biological role, apoptosis-inducing protein that modulates the tumor suppressor function of CDKN2A/p14ARF. Enhances the stability of CDKN2A/p14ARF protein by protecting it from degradation. May act as a tumor suppressor. The sequence is that of Proapoptotic nucleolar protein 1 from Homo sapiens (Human).